The sequence spans 154 residues: MVDVAFVCLGNICRSPMAEAIMRQRLIDRNISGVNVYSKGTGKWNLGEPPHEGTQDILNRHNIPFDGMISELFESSDDFDYIIAMDQSNVDNIQNINPNIKGKLFKLLEFSNMEESDVPDPYYTNNFEGVYEMVQSSCDNLIDFIVKDANLKEG.

The active-site Nucleophile is Cys8. Residue Arg14 is part of the active site. The active-site Proton donor is the Asp120.

Belongs to the low molecular weight phosphotyrosine protein phosphatase family.

It catalyses the reaction O-phospho-L-tyrosyl-[protein] + H2O = L-tyrosyl-[protein] + phosphate. Dephosphorylates the phosphotyrosine-containing proteins. This Staphylococcus haemolyticus (strain JCSC1435) protein is Low molecular weight protein-tyrosine-phosphatase PtpA (ptpA).